We begin with the raw amino-acid sequence, 136 residues long: Histone H3.3 (136 aa).

The segment at 1-42 (MARTKQTARKSTGGKAPRKQLASKAARKSAPVSGGVKKPHRY) is disordered. K5 is subject to N6,N6,N6-trimethyllysine; alternate. At K5 the chain carries N6,N6-dimethyllysine; alternate. N6-methyllysine; alternate occurs at positions 5 and 10. The residue at position 10 (K10) is an N6-acetyllysine; alternate. S11 carries the post-translational modification Phosphoserine. Position 15 is an N6,N6-dimethyllysine; alternate (K15). 5 positions are modified to N6-acetyllysine; alternate: K15, K19, K24, K28, and K37. An N6-methyllysine; alternate mark is found at K19, K24, K28, and K37. An N6,N6,N6-trimethyllysine; alternate mark is found at K28 and K37. N6,N6-dimethyllysine; alternate is present on residues K28 and K37. N6-acetyllysine is present on residues K57 and K65. K80 is subject to N6,N6,N6-trimethyllysine; alternate. Position 80 is an N6,N6-dimethyllysine; alternate (K80). K80 carries the N6-methyllysine; alternate modification.

It belongs to the histone H3 family. In terms of assembly, the nucleosome is a histone octamer containing two molecules each of H2A, H2B, H3 and H4 assembled in one H3-H4 heterotetramer and two H2A-H2B heterodimers. The octamer wraps approximately 147 bp of DNA. Post-translationally, phosphorylated by IPL1 to form H3S10ph. H3S10ph promotes subsequent H3K14ac formation and is required for transcriptional activation through TBP recruitment to the promoters. In terms of processing, mono-, di- and trimethylated by the COMPASS complex to form H3K4me1/2/3. H3K4me activates gene expression by regulating transcription elongation and plays a role in telomere length maintenance. H3K4me enrichment correlates with transcription levels, and occurs in a 5' to 3' gradient with H3K4me3 enrichment at the 5'-end of genes, shifting to H3K4me2 and then H3K4me1. Methylated by SET2 to form H3K36me. H3K36me represses gene expression. Methylated by DOT1 to form H3K79me. H3K79me is required for association of SIR proteins with telomeric regions and for telomeric silencing. The COMPASS-mediated formation of H3K4me2/3 and the DOT1-mediated formation of H3K79me require H2BK123ub1. Acetylation of histone H3 leads to transcriptional activation. H3K14ac formation by GCN5 is promoted by H3S10ph. H3K14ac can also be formed by ESA1. H3K56ac formation occurs predominantly in newly synthesized H3 molecules during G1, S and G2/M of the cell cycle and may be involved in DNA repair.

Its subcellular location is the nucleus. It localises to the chromosome. In terms of biological role, core component of nucleosome. Nucleosomes wrap and compact DNA into chromatin, limiting DNA accessibility to the cellular machineries which require DNA as a template. Histones thereby play a central role in transcription regulation, DNA repair, DNA replication and chromosomal stability. DNA accessibility is regulated via a complex set of post-translational modifications of histones, also called histone code, and nucleosome remodeling. The chain is Histone H3.3 (HHT3) from Candida albicans (strain SC5314 / ATCC MYA-2876) (Yeast).